The chain runs to 676 residues: Envelope glycoprotein (676 aa).

An N-terminal signal peptide occupies residues methionine 1–serine 32. The receptor binding stretch occupies residues methionine 33 to isoleucine 185. Residues methionine 33–glutamine 650 lie on the Extracellular side of the membrane. A glycan (N-linked (GlcNAc...) asparagine; by host) is linked at asparagine 40. 5 cysteine pairs are disulfide-bonded: cysteine 53-cysteine 609, cysteine 108-cysteine 135, cysteine 121-cysteine 147, cysteine 511-cysteine 556, and cysteine 601-cysteine 608. 8 N-linked (GlcNAc...) asparagine; by host glycosylation sites follow: asparagine 204, asparagine 208, asparagine 238, asparagine 257, asparagine 268, asparagine 296, asparagine 314, and asparagine 366. The segment at glutamate 305 to threonine 485 is mucin-like region. Disordered regions lie at residues arginine 337–valine 373 and arginine 404–proline 461. 2 stretches are compositionally biased toward low complexity: residues proline 405–threonine 428 and proline 449–proline 461. Asparagine 463 is a glycosylation site (N-linked (GlcNAc...) asparagine; by host). The tract at residues histidine 524–alanine 539 is fusion peptide. Positions leucine 554 to arginine 595 form a coiled coil. An N-linked (GlcNAc...) asparagine; by host glycan is attached at asparagine 563. Positions tryptophan 615–proline 634 form a coiled coil. Residue asparagine 618 is glycosylated (N-linked (GlcNAc...) asparagine; by host). Residues tryptophan 651–valine 671 form a helical membrane-spanning segment. S-palmitoyl cysteine; by host attachment occurs at residues cysteine 670 and cysteine 672. The Cytoplasmic segment spans residues cysteine 672 to cysteine 676.

The protein belongs to the filoviruses glycoprotein family. Homotrimer; each monomer consists of a GP1 and a GP2 subunit linked by disulfide bonds. The resulting peplomers (GP1,2) protrude from the virus surface as spikes. Interacts with host integrin alpha-V/ITGAV. Interacts with host CLEC10A. Binds also to host CD209 and CLEC4M/DC-SIGN(R). Interacts with host FOLR1. Interacts with BST2; this interaction inhibits the antiviral effect of BST2 and this allows viral release from infected cells. Interacts with host FCN1; this interaction enhances viral entry. Interacts with host TLR4; this interaction induces cell death in T-lymphocytes or proinflammatory cytokines and SOCS1 production in monocytes. As to quaternary structure, interacts with host entry receptor NPC1. In terms of assembly, GP1 and GP2delta are part of GP1,2delta soluble complexes released by ectodomain shedding. N-glycosylated. Post-translationally, O-glycosylated in the mucin-like region. In terms of processing, palmitoylation of GP2 is not required for its function. Specific enzymatic cleavages in vivo yield mature proteins. The precursor is processed into GP1 and GP2 by host cell furin in the trans Golgi, and maybe by other host proteases, to yield the mature GP1 and GP2 proteins. The cleavage site corresponds to the furin optimal cleavage sequence [KR]-X-[KR]-R. This cleavage does not seem to be required for function. After the internalization of the virus into cell endosomes, GP1 C-terminus is removed by the endosomal proteases cathepsin B, cathepsin L, or both, leaving a 19-kDa N-terminal fragment which is further digested by cathepsin B. Proteolytic processing of GP1,2 by host ADAM17 can remove the transmembrane anchor of GP2 and leads to shedding of complexes consisting in GP1 and truncated GP2 (GP1,2delta).

Its subcellular location is the virion membrane. It localises to the host cell membrane. It is found in the secreted. Functionally, trimeric GP1,2 complexes form the virion surface spikes and mediate the viral entry processes, with GP1 acting as the receptor-binding subunit and GP2 as the membrane fusion subunit. At later times of infection, down-regulates the expression of various host cell surface molecules that are essential for immune surveillance and cell adhesion. Down-modulates several integrins including ITGA1, ITGA2, ITGA3, ITGA4, ITGA5, ITGA6, ITGAV and ITGB1. This decrease in cell adhesion molecules may lead to cell detachment, contributing to the disruption of blood vessel integrity and hemorrhages developed during infection (cytotoxicity). Interacts with host TLR4 and thereby stimulates the differentiation and activation of monocytes leading to bystander death of T-lymphocytes. Down-regulates as well the function of host natural killer cells. Counteracts the antiviral effect of host BST2/tetherin that restricts release of progeny virions from infected cells. However, cooperates with VP40 and host BST2 to activate canonical NF-kappa-B pathway in a manner dependent on neddylation. Functions as a decoy for anti-GP1,2 antibodies thereby contributing to viral immune evasion. Interacts and activates host macrophages and dendritic cells inducing up-regulation of cytokine transcription. This effect is mediated throught activation of host TLR4. In terms of biological role, responsible for binding to the receptor(s) on target cells. Interacts with CD209/DC-SIGN and CLEC4M/DC-SIGNR which act as cofactors for virus entry into dendritic cells (DCs) and endothelial cells. Binding to the macrophage specific lectin CLEC10A also seems to enhance virus infectivity. Interaction with FOLR1/folate receptor alpha may be a cofactor for virus entry in some cell types, although results are contradictory. Members of the Tyro3 receptor tyrosine kinase family also seem to be cell entry factors in filovirus infection. Once attached, the virions are internalized through clathrin-dependent endocytosis and/or macropinocytosis. After internalization of the virus into the endosomes of the host cell, proteolysis of GP1 by two cysteine proteases, CTSB/cathepsin B and CTSL/cathepsin L removes the glycan cap and allows GP1 binding to the host entry receptor NPC1. NPC1-binding, Ca(2+) and acidic pH induce a conformational change of GP2, which unmasks its fusion peptide and permit membranes fusion. Its function is as follows. Acts as a class I viral fusion protein. Under the current model, the protein has at least 3 conformational states: pre-fusion native state, pre-hairpin intermediate state, and post-fusion hairpin state. During viral and target cell membrane fusion, the coiled coil regions (heptad repeats) assume a trimer-of-hairpins structure, positioning the fusion peptide in close proximity to the C-terminal region of the ectodomain. The formation of this structure appears to drive apposition and subsequent fusion of viral and target cell membranes. Responsible for penetration of the virus into the cell cytoplasm by mediating the fusion of the membrane of the endocytosed virus particle with the endosomal membrane. Low pH in endosomes induces an irreversible conformational change in GP2, releasing the fusion hydrophobic peptide. In Sudan ebolavirus (strain Human/Uganda/Gulu/2000) (SEBOV), this protein is Envelope glycoprotein (GP).